Here is a 550-residue protein sequence, read N- to C-terminus: Hydroxylamine reductase (550 aa).

[4Fe-4S] cluster contacts are provided by Cys7, Cys10, Cys19, and Cys25. Positions 244, 268, 312, 405, 433, 458, 493, and 495 each coordinate hybrid [4Fe-2O-2S] cluster. Cys405 is subject to Cysteine persulfide.

The protein belongs to the HCP family. [4Fe-4S] cluster is required as a cofactor. Hybrid [4Fe-2O-2S] cluster serves as cofactor.

Its subcellular location is the cytoplasm. It catalyses the reaction A + NH4(+) + H2O = hydroxylamine + AH2 + H(+). In terms of biological role, catalyzes the reduction of hydroxylamine to form NH(3) and H(2)O. The chain is Hydroxylamine reductase from Porphyromonas gingivalis (strain ATCC 33277 / DSM 20709 / CIP 103683 / JCM 12257 / NCTC 11834 / 2561).